The chain runs to 373 residues: Probable jasmonic acid carboxyl methyltransferase 2 (373 aa).

Y18 lines the S-adenosyl-L-homocysteine pocket. Jasmonate is bound at residue Q25. 6 residues coordinate S-adenosyl-L-homocysteine: C59, N64, D96, L97, S135, and F136. Jasmonate contacts are provided by H156 and W157. Residues N174, D260, F262, and N263 each coordinate Mg(2+).

It belongs to the methyltransferase superfamily. Type-7 methyltransferase family. Requires Mg(2+) as cofactor.

The protein resides in the cytoplasm. Its subcellular location is the nucleus. It carries out the reaction jasmonate + S-adenosyl-L-methionine = methyl (-)-jasmonate + S-adenosyl-L-homocysteine. Its pathway is lipid metabolism; oxylipin biosynthesis. Catalyzes the methylation of jasmonate into methyljasmonate, a plant volatile that acts as an important cellular regulator mediating diverse developmental processes and defense responses. The protein is Probable jasmonic acid carboxyl methyltransferase 2 of Theobroma cacao (Cacao).